We begin with the raw amino-acid sequence, 244 residues long: Large ribosomal subunit protein bL25 (244 aa).

The tract at residues 197 to 244 (ADVEAEAAEAALAKEAATEAAEEEETEKPASEAEASGEAEQADTDKKE) is disordered. A compositionally biased stretch (low complexity) spans 204-215 (AEAALAKEAATE).

The protein belongs to the bacterial ribosomal protein bL25 family. CTC subfamily. Part of the 50S ribosomal subunit; part of the 5S rRNA/L5/L18/L25 subcomplex. Contacts the 5S rRNA. Binds to the 5S rRNA independently of L5 and L18.

In terms of biological role, this is one of the proteins that binds to the 5S RNA in the ribosome where it forms part of the central protuberance. This is Large ribosomal subunit protein bL25 from Coxiella burnetii (strain CbuK_Q154) (Coxiella burnetii (strain Q154)).